A 905-amino-acid polypeptide reads, in one-letter code: DNA mismatch repair protein MutS (905 aa).

The interval 1-95 is disordered; sequence MELSLQGSLF…PAWGHHSQLK (95 aa). A compositionally biased stretch (basic and acidic residues) spans 38-50; it reads NLSDADLSKDALA. Position 721–728 (721–728) interacts with ATP; sequence GPNASGKS.

Belongs to the DNA mismatch repair MutS family.

This protein is involved in the repair of mismatches in DNA. It is possible that it carries out the mismatch recognition step. This protein has a weak ATPase activity. The polypeptide is DNA mismatch repair protein MutS (Synechococcus sp. (strain CC9902)).